The primary structure comprises 232 residues: 2-C-methyl-D-erythritol 4-phosphate cytidylyltransferase (232 aa).

The protein belongs to the IspD/TarI cytidylyltransferase family. IspD subfamily.

The enzyme catalyses 2-C-methyl-D-erythritol 4-phosphate + CTP + H(+) = 4-CDP-2-C-methyl-D-erythritol + diphosphate. The protein operates within isoprenoid biosynthesis; isopentenyl diphosphate biosynthesis via DXP pathway; isopentenyl diphosphate from 1-deoxy-D-xylulose 5-phosphate: step 2/6. Catalyzes the formation of 4-diphosphocytidyl-2-C-methyl-D-erythritol from CTP and 2-C-methyl-D-erythritol 4-phosphate (MEP). The polypeptide is 2-C-methyl-D-erythritol 4-phosphate cytidylyltransferase (Stenotrophomonas maltophilia (strain K279a)).